We begin with the raw amino-acid sequence, 153 residues long: ORM1-like protein 1 (153 aa).

Residues 1–26 lie on the Cytoplasmic side of the membrane; the sequence is MNVGVAHSEVNPNTRVMNSRGMWLTY. The next 2 membrane-spanning stretches (helical) occupy residues 27 to 46 and 47 to 64; these read ALGV…FSVP and VAWT…YVFL. Residues 65–100 lie on the Cytoplasmic side of the membrane; it reads HAVKGTPFETPDQGKARLLTHWEQLDYGVQFTSSRK. The chain crosses the membrane as a helical span at residues 101–121; sequence FFTISPIILYFLASFYTKYDT. The Extracellular portion of the chain corresponds to 122–123; that stretch reads TH. The chain crosses the membrane as a helical span at residues 124-140; it reads FILNTASLLSVLIPKMP. Residues 141-153 are Cytoplasmic-facing; the sequence is QLHGVRIFGINKY.

The protein belongs to the ORM family. Ceramide-sensitive subunit of the serine palmitoyltransferase (SPT) complex, which is also composed of SPTLC1, SPTLC2/3 and SPTSSA/B.

It is found in the endoplasmic reticulum membrane. Functionally, plays an essential role in the homeostatic regulation of sphingolipid de novo biosynthesis by modulating the activity of the serine palmitoyltransferase (SPT) in response to ceramide levels. When complexed to SPT, the binding of ceramides to its N-terminus stabilizes a conformation that block SPT substrate entry, hence preventing SPT catalytic activity. Through this mechanism, maintains ceramide levels at sufficient concentrations for the production of complex sphingolipids, but which prevents the accumulation of ceramides to levels that trigger apoptosis. The chain is ORM1-like protein 1 (ORMDL1) from Bos taurus (Bovine).